We begin with the raw amino-acid sequence, 204 residues long: Chaperone protein TorD (204 aa).

The protein belongs to the TorD/DmsD family. TorD subfamily.

The protein resides in the cytoplasm. Involved in the biogenesis of TorA. Acts on TorA before the insertion of the molybdenum cofactor and, as a result, probably favors a conformation of the apoenzyme that is competent for acquiring the cofactor. The polypeptide is Chaperone protein TorD (Shewanella baltica (strain OS223)).